Here is a 252-residue protein sequence, read N- to C-terminus: Enolase-phosphatase E1 (252 aa).

Mg(2+)-binding residues include Asp-14 and Glu-16. Substrate contacts are provided by residues 143 to 144 and Lys-177; that span reads SS. Asp-202 is a binding site for Mg(2+).

It belongs to the HAD-like hydrolase superfamily. MasA/MtnC family. In terms of assembly, monomer. Requires Mg(2+) as cofactor.

It localises to the cytoplasm. The protein resides in the nucleus. It carries out the reaction 5-methylsulfanyl-2,3-dioxopentyl phosphate + H2O = 1,2-dihydroxy-5-(methylsulfanyl)pent-1-en-3-one + phosphate. It participates in amino-acid biosynthesis; L-methionine biosynthesis via salvage pathway; L-methionine from S-methyl-5-thio-alpha-D-ribose 1-phosphate: step 3/6. It functions in the pathway amino-acid biosynthesis; L-methionine biosynthesis via salvage pathway; L-methionine from S-methyl-5-thio-alpha-D-ribose 1-phosphate: step 4/6. In terms of biological role, bifunctional enzyme that catalyzes the enolization of 2,3-diketo-5-methylthiopentyl-1-phosphate (DK-MTP-1-P) into the intermediate 2-hydroxy-3-keto-5-methylthiopentenyl-1-phosphate (HK-MTPenyl-1-P), which is then dephosphorylated to form the acireductone 1,2-dihydroxy-3-keto-5-methylthiopentene (DHK-MTPene). This is Enolase-phosphatase E1 from Drosophila pseudoobscura pseudoobscura (Fruit fly).